The primary structure comprises 454 residues: Bifunctional protein GlmU (454 aa).

A pyrophosphorylase region spans residues 1–226; sequence MTTTVIILAA…AFEVEGVNDR (226 aa). Residues 8 to 11, lysine 22, glutamine 73, 78 to 79, 100 to 102, glycine 137, glutamate 151, asparagine 166, and asparagine 224 contribute to the UDP-N-acetyl-alpha-D-glucosamine site; these read LAAG, GT, and YGD. Residue aspartate 102 participates in Mg(2+) binding. Asparagine 224 lines the Mg(2+) pocket. Positions 227–247 are linker; that stretch reads LQLAALEREFQLQQAKSLMQQ. The interval 248–454 is N-acetyltransferase; it reads GVTLTDPSRF…NYQRPQKLKK (207 aa). Residues arginine 330 and lysine 348 each contribute to the UDP-N-acetyl-alpha-D-glucosamine site. The active-site Proton acceptor is the histidine 360. UDP-N-acetyl-alpha-D-glucosamine is bound by residues tyrosine 363 and asparagine 374. Acetyl-CoA-binding positions include alanine 377, 383–384, serine 402, alanine 420, and arginine 437; that span reads NY.

This sequence in the N-terminal section; belongs to the N-acetylglucosamine-1-phosphate uridyltransferase family. In the C-terminal section; belongs to the transferase hexapeptide repeat family. In terms of assembly, homotrimer. It depends on Mg(2+) as a cofactor.

The protein resides in the cytoplasm. It carries out the reaction alpha-D-glucosamine 1-phosphate + acetyl-CoA = N-acetyl-alpha-D-glucosamine 1-phosphate + CoA + H(+). It catalyses the reaction N-acetyl-alpha-D-glucosamine 1-phosphate + UTP + H(+) = UDP-N-acetyl-alpha-D-glucosamine + diphosphate. Its pathway is nucleotide-sugar biosynthesis; UDP-N-acetyl-alpha-D-glucosamine biosynthesis; N-acetyl-alpha-D-glucosamine 1-phosphate from alpha-D-glucosamine 6-phosphate (route II): step 2/2. The protein operates within nucleotide-sugar biosynthesis; UDP-N-acetyl-alpha-D-glucosamine biosynthesis; UDP-N-acetyl-alpha-D-glucosamine from N-acetyl-alpha-D-glucosamine 1-phosphate: step 1/1. It functions in the pathway bacterial outer membrane biogenesis; LPS lipid A biosynthesis. Its function is as follows. Catalyzes the last two sequential reactions in the de novo biosynthetic pathway for UDP-N-acetylglucosamine (UDP-GlcNAc). The C-terminal domain catalyzes the transfer of acetyl group from acetyl coenzyme A to glucosamine-1-phosphate (GlcN-1-P) to produce N-acetylglucosamine-1-phosphate (GlcNAc-1-P), which is converted into UDP-GlcNAc by the transfer of uridine 5-monophosphate (from uridine 5-triphosphate), a reaction catalyzed by the N-terminal domain. This is Bifunctional protein GlmU from Acinetobacter baylyi (strain ATCC 33305 / BD413 / ADP1).